Reading from the N-terminus, the 162-residue chain is Probable chemoreceptor glutamine deamidase CheD (162 aa).

It belongs to the CheD family.

The enzyme catalyses L-glutaminyl-[protein] + H2O = L-glutamyl-[protein] + NH4(+). Probably deamidates glutamine residues to glutamate on methyl-accepting chemotaxis receptors (MCPs), playing an important role in chemotaxis. This chain is Probable chemoreceptor glutamine deamidase CheD, found in Clostridium kluyveri (strain ATCC 8527 / DSM 555 / NBRC 12016 / NCIMB 10680 / K1).